Here is a 205-residue protein sequence, read N- to C-terminus: MRLRNDKFALSELNEFKFFIKNYPFNIKEDDILEIGSGKGEMISQMALLNPNQRFIAIEKYPTVAKKIMQKIKELNLENLYISCIDASKLSENFIGKTNTIWLTFSDPWPKKRHEKRRLTYKSFLDQYKFLLKDKNSNFYLKTDNDLFFNYSLESLQENNWNLKFVTGDLHNSIYNETNIKTGYEIKWMDKTKINFLIASKGENA.

Residues Glu-34, Glu-59, Asp-86, and Asp-107 each coordinate S-adenosyl-L-methionine. Asp-107 is a catalytic residue. Lys-111 contributes to the substrate binding site. Residues 113–118 (RHEKRR) are interaction with RNA. Residues Asp-144 and 182–185 (TGYE) each bind substrate.

Belongs to the class I-like SAM-binding methyltransferase superfamily. TrmB family.

The enzyme catalyses guanosine(46) in tRNA + S-adenosyl-L-methionine = N(7)-methylguanosine(46) in tRNA + S-adenosyl-L-homocysteine. It functions in the pathway tRNA modification; N(7)-methylguanine-tRNA biosynthesis. Its function is as follows. Catalyzes the formation of N(7)-methylguanine at position 46 (m7G46) in tRNA. The polypeptide is tRNA (guanine-N(7)-)-methyltransferase (Mycoplasmopsis synoviae (strain 53) (Mycoplasma synoviae)).